The following is a 216-amino-acid chain: Pyrrolidone-carboxylate peptidase (216 aa).

Residues Glu80, Cys143, and His168 contribute to the active site.

Belongs to the peptidase C15 family. Homotetramer.

The protein localises to the cytoplasm. The catalysed reaction is Release of an N-terminal pyroglutamyl group from a polypeptide, the second amino acid generally not being Pro.. In terms of biological role, removes 5-oxoproline from various penultimate amino acid residues except L-proline. This chain is Pyrrolidone-carboxylate peptidase, found in Cupriavidus pinatubonensis (strain JMP 134 / LMG 1197) (Cupriavidus necator (strain JMP 134)).